A 158-amino-acid chain; its full sequence is Large ribosomal subunit protein uL15 (158 aa).

Basic and acidic residues predominate over residues 1-13; the sequence is MKLNEIKDNEGST. The disordered stretch occupies residues 1-45; sequence MKLNEIKDNEGSTHSRKRLGRGIGSGSGKTGGRGVKGQKSRSGVA. Over residues 21–35 the composition is skewed to gly residues; it reads RGIGSGSGKTGGRGV.

It belongs to the universal ribosomal protein uL15 family. Part of the 50S ribosomal subunit.

Functionally, binds to the 23S rRNA. The protein is Large ribosomal subunit protein uL15 of Rhizobium leguminosarum bv. trifolii (strain WSM2304).